A 398-amino-acid chain; its full sequence is Glycosyltransferase GlyF (398 aa).

The segment at methionine 1–leucine 259 is GT8 domain. UDP is bound by residues alanine 8 to tyrosine 13 and aspartate 101 to serine 102. The Mn(2+) site is built by aspartate 101, aspartate 103, and histidine 221. Histidine 221 to lysine 227 serves as a coordination point for UDP.

The protein in the N-terminal section; belongs to the glycosyltransferase 8 family.

May be involved in the polymorphic O-glycosylation of the serine-rich repeat protein PsrP. Has hydrolytic activity against UDP-galactose and to a lesser extent against UDP-glucose; no glycosyltransferase activity has been seen with tested substrates. The chain is Glycosyltransferase GlyF from Streptococcus pneumoniae serotype 4 (strain ATCC BAA-334 / TIGR4).